Reading from the N-terminus, the 199-residue chain is Protein shisa-like-1 (199 aa).

The N-terminal stretch at Met1–Ser25 is a signal peptide. Residues Ala26–Thr97 are Extracellular-facing. Asn53 and Asn95 each carry an N-linked (GlcNAc...) asparagine glycan. The helical transmembrane segment at Ala98 to Leu118 threads the bilayer. The Cytoplasmic portion of the chain corresponds to Tyr119–Ala199. Residues Pro146–Ala199 form a disordered region. Over residues Pro152–Pro163 the composition is skewed to low complexity. Residues Gln164–Gln174 are compositionally biased toward pro residues.

The protein belongs to the shisa family.

The protein localises to the membrane. The sequence is that of Protein shisa-like-1 from Homo sapiens (Human).